We begin with the raw amino-acid sequence, 89 residues long: Antimicrobial peptide Ar-AMP (89 aa).

An N-terminal signal peptide occupies residues 1-25 (MVNMKSVALIVIVMMAFMMVDPSMG). In terms of domain architecture, Chitin-binding type-1 spans 26-68 (AGECVQGRCPSGMCCSQFGYCGRGPKYCGRASTTVDHQADAAA). Intrachain disulfides connect Cys29–Cys40, Cys34–Cys46, and Cys39–Cys53. The propeptide at 56-89 (ASTTVDHQADAAAAAATKTANNPTDAKLAGAGSP) is removed in mature form.

Functionally, chitin-binding protein that inhibits the growth of the fungal pathogens B.cinerea, F.culmorum, H.sativum and A.consortiale, but not that of R.solani. Induces morphological changes in the fungal pathogens F.culmorum, H.sativum and R.solani, but not in A.consortiale and B.cinerea. Has antibacterial activity against the Gram-positive bacterium B.subtilis, but lacks antibacterial activity against the Gram-negative bacterium E.coli. In Amaranthus retroflexus (Redroot amaranth), this protein is Antimicrobial peptide Ar-AMP.